Here is a 67-residue protein sequence, read N- to C-terminus: Teratocyte protein CftICK-II (67 aa).

The N-terminal stretch at 1–25 is a signal peptide; that stretch reads MVKSLLFAIGYLIFLLVTRVNVINA. 3 disulfides stabilise this stretch: Cys-28-Cys-42, Cys-35-Cys-46, and Cys-41-Cys-57.

In terms of tissue distribution, abundantly expressed by teratocytes, which are extra-embryonic cells released by parasitoid wasps into their hosts during larval eclosion.

The protein resides in the secreted. Functionally, this endoparasitoid wasp peptide has immununosuppressive, antimicrobial and insecticidal activities. Suppress cellular immunity which is detectable as a reduction of hemocyte encapsulation in the host. Shows moderate antifungal activity against C.albicans (MIC=4 ug/ml). In vivo, ingestion of this peptide (probably at excessive doses) increases larval mortality and reduces leaf consumption of D.saccharalis, a permissive host for C.flavipes. This is Teratocyte protein CftICK-II from Cotesia flavipes (Parasitic wasp).